A 197-amino-acid chain; its full sequence is Tyrosine-protein phosphatase-like protein OCA2 (197 aa).

A Tyrosine-protein phosphatase domain is found at 10-160; sequence SPVVSTDVSL…FETNLKIPRN (151 aa). The residue at position 181 (Ser-181) is a Phosphoserine.

This sequence belongs to the protein-tyrosine phosphatase family.

Its subcellular location is the cytoplasm. Its function is as follows. Required for normal growth in the presence of linoleic acid hydroperoxide (LoaOOH). The sequence is that of Tyrosine-protein phosphatase-like protein OCA2 (OCA2) from Saccharomyces cerevisiae (strain ATCC 204508 / S288c) (Baker's yeast).